The chain runs to 366 residues: 4-hydroxy-3-methylbut-2-en-1-yl diphosphate synthase (flavodoxin) (366 aa).

[4Fe-4S] cluster contacts are provided by cysteine 270, cysteine 273, cysteine 305, and glutamate 312.

It belongs to the IspG family. [4Fe-4S] cluster serves as cofactor.

It carries out the reaction (2E)-4-hydroxy-3-methylbut-2-enyl diphosphate + oxidized [flavodoxin] + H2O + 2 H(+) = 2-C-methyl-D-erythritol 2,4-cyclic diphosphate + reduced [flavodoxin]. Its pathway is isoprenoid biosynthesis; isopentenyl diphosphate biosynthesis via DXP pathway; isopentenyl diphosphate from 1-deoxy-D-xylulose 5-phosphate: step 5/6. Its function is as follows. Converts 2C-methyl-D-erythritol 2,4-cyclodiphosphate (ME-2,4cPP) into 1-hydroxy-2-methyl-2-(E)-butenyl 4-diphosphate. The protein is 4-hydroxy-3-methylbut-2-en-1-yl diphosphate synthase (flavodoxin) of Acidithiobacillus ferrooxidans (strain ATCC 53993 / BNL-5-31) (Leptospirillum ferrooxidans (ATCC 53993)).